A 218-amino-acid polypeptide reads, in one-letter code: Ribonuclease HII (218 aa).

The RNase H type-2 domain occupies 24 to 218 (ESIAGVDEVG…KLFAVNGSLT (195 aa)). Residues Asp30, Glu31, and Asp126 each contribute to the a divalent metal cation site.

Belongs to the RNase HII family. The cofactor is Mn(2+). It depends on Mg(2+) as a cofactor.

It is found in the cytoplasm. It carries out the reaction Endonucleolytic cleavage to 5'-phosphomonoester.. Its function is as follows. Endonuclease that specifically degrades the RNA of RNA-DNA hybrids. The sequence is that of Ribonuclease HII from Prochlorococcus marinus (strain MIT 9313).